The following is a 628-amino-acid chain: DEAD-box ATP-dependent RNA helicase 9 (628 aa).

The short motif at leucine 98 to arginine 126 is the Q motif element. Residues leucine 129 to isoleucine 302 enclose the Helicase ATP-binding domain. Alanine 142–threonine 149 is a binding site for ATP. The short motif at aspartate 250 to aspartate 253 is the DEAD box element. A Helicase C-terminal domain is found at valine 331–methionine 478. Disordered regions lie at residues glycine 496–glycine 548 and serine 571–serine 628. The segment covering arginine 500–serine 509 has biased composition (low complexity). Residues arginine 510 to glycine 548 show a composition bias toward gly residues.

This sequence belongs to the DEAD box helicase family. DDX21/DDX50 subfamily.

It carries out the reaction ATP + H2O = ADP + phosphate + H(+). This is DEAD-box ATP-dependent RNA helicase 9 from Oryza sativa subsp. japonica (Rice).